Reading from the N-terminus, the 647-residue chain is Beta-glucosidase-like SFR2, chloroplastic (647 aa).

Positions 116 to 140 (SAAGDGGSQQSWRSTGGENIGDREQ) are disordered. The segment covering 123–132 (SQQSWRSTGG) has biased composition (polar residues). A glycan (N-linked (GlcNAc...) asparagine) is linked at Asn169. A beta-D-glucoside-binding positions include His258, 302 to 303 (NE), Tyr414, Glu466, Trp504, 511 to 512 (EW), and Phe520. Glu303 serves as the catalytic Proton donor. Residue Glu466 is the Nucleophile of the active site.

This sequence belongs to the glycosyl hydrolase 1 family.

The protein localises to the plastid. Its subcellular location is the chloroplast outer membrane. The catalysed reaction is 2 a 1,2-diacyl-3-O-(beta-D-galactosyl)-sn-glycerol = a 1,2-diacyl-3-O-[beta-D-galactosyl-(1-&gt;6)-beta-D-galactosyl]-sn-glycerol + a 1,2-diacyl-sn-glycerol. Its function is as follows. Galactosyltransferase synthesizing digalactosyldiacylglycerol from monogalactosyldiacylglycerol in the absence of UDP-galactose. Potentially involved in freezing tolerance. The polypeptide is Beta-glucosidase-like SFR2, chloroplastic (Oryza sativa subsp. japonica (Rice)).